The primary structure comprises 81 residues: Large ribosomal subunit protein bL31B (81 aa).

This sequence belongs to the bacterial ribosomal protein bL31 family. Type B subfamily. Part of the 50S ribosomal subunit.

The protein is Large ribosomal subunit protein bL31B of Cutibacterium acnes (strain DSM 16379 / KPA171202) (Propionibacterium acnes).